The following is a 985-amino-acid chain: Disease resistance protein At4g27190 (985 aa).

A coiled-coil region spans residues 24–88; that stretch reads ANAIKFKSNV…ISKARLKLEE (65 aa). Residues 167–429 enclose the NB-ARC domain; it reads IGVWGMGGVG…MAEGFMEELG (263 aa). 171–178 serves as a coordination point for ATP; the sequence is GMGGVGKT. 6 LRR repeats span residues 502–523, 526–547, 551–572, 575–597, 598–620, and 621–643; these read SLRR…VEEF, KTSV…GFLQ, TLRI…SLLR, SLHS…ETLA, KLEL…EELK, and RFRH…VVSR.

It belongs to the disease resistance NB-LRR family.

Functionally, disease resistance protein. The polypeptide is Disease resistance protein At4g27190 (Arabidopsis thaliana (Mouse-ear cress)).